A 206-amino-acid polypeptide reads, in one-letter code: Small ribosomal subunit protein uS4 (206 aa).

An S4 RNA-binding domain is found at 96-156 (GRLDNVVYRM…EKAKKQSRVK (61 aa)).

This sequence belongs to the universal ribosomal protein uS4 family. As to quaternary structure, part of the 30S ribosomal subunit. Contacts protein S5. The interaction surface between S4 and S5 is involved in control of translational fidelity.

One of the primary rRNA binding proteins, it binds directly to 16S rRNA where it nucleates assembly of the body of the 30S subunit. Functionally, with S5 and S12 plays an important role in translational accuracy. The chain is Small ribosomal subunit protein uS4 from Pectobacterium atrosepticum (strain SCRI 1043 / ATCC BAA-672) (Erwinia carotovora subsp. atroseptica).